Consider the following 152-residue polypeptide: Large ribosomal subunit protein uL13 (152 aa).

The protein belongs to the universal ribosomal protein uL13 family. As to quaternary structure, part of the 50S ribosomal subunit.

Functionally, this protein is one of the early assembly proteins of the 50S ribosomal subunit, although it is not seen to bind rRNA by itself. It is important during the early stages of 50S assembly. The chain is Large ribosomal subunit protein uL13 from Wolbachia pipientis wMel.